We begin with the raw amino-acid sequence, 136 residues long: Snaclec rhodocytin subunit alpha (136 aa).

3 disulfides stabilise this stretch: Cys-5–Cys-16, Cys-33–Cys-131, and Cys-106–Cys-123. Residues 12–132 (YDQHCYQAFN…CEQMHAFVCK (121 aa)) enclose the C-type lectin domain.

Belongs to the snaclec family. In terms of assembly, dimer (non-covalently linked) of heterodimers of subunits alpha and beta (disulfide-linked). In terms of tissue distribution, expressed by the venom gland.

The protein resides in the secreted. Functionally, elicits platelet aggregation by the binding to the C-type lectin domain family 1 member B (CLEC1B/CLEC2). Binding leads to tyrosine phosphorylation in the cytoplasmic tail of CLEC1B, which promotes the binding of spleen tyrosine kinase (Syk), subsequent activation of PLC-gamma-2, and platelet activation and aggregation. Binding to GPIbalpha (GP1BA) and alpha-2/beta-1 (ITGA2/ITGB1) may also induce aggregation, but this is controversial. The protein is Snaclec rhodocytin subunit alpha of Calloselasma rhodostoma (Malayan pit viper).